The following is a 529-amino-acid chain: Low affinity inorganic phosphate transporter 5 (529 aa).

The Cytoplasmic portion of the chain corresponds to 1 to 21 (MASNNLNVLNALDTAHTQWYH). A helical transmembrane segment spans residues 22–42 (VTAVVIAGMGFFTDAYDLFCI). The Extracellular portion of the chain corresponds to 43–71 (STISKLLGRLYYYDPHTHAPGKLPHTVNN). A helical membrane pass occupies residues 72–92 (WVTGVALVGTLTGQLVFGWLG). Residues 93 to 99 (DKLGRKK) lie on the Cytoplasmic side of the membrane. Residues 100-120 (VYGLTLILMVICALSSGLSFG) form a helical membrane-spanning segment. Residues 121–124 (YSRK) lie on the Extracellular side of the membrane. Residues 125 to 145 (VVIGTLCFFRFWLGFGIGGDY) traverse the membrane as a helical segment. Residues 146–163 (PLSATIMSEYANKRTRGA) lie on the Cytoplasmic side of the membrane. The helical transmembrane segment at 164–184 (FIAAVFAMQGVGIIFAGLVLM) threads the bilayer. At 185–211 (TVSKVFLMRYAGKAFSTDEVFSTEPEA) the chain is on the extracellular side. Residues 212–232 (DYVWRIVLMLGALPALLTYYW) traverse the membrane as a helical segment. Topologically, residues 233-291 (RMKMPETGRYTAIIEGNAKQAAIDMGKVLEIEIQAEGEKLAKFKSANDYSLLSNEFFQR) are cytoplasmic. Residues 292-312 (HGLHLIGTMSTWFLLDIAFYS) form a helical membrane-spanning segment. The Extracellular segment spans residues 313-344 (QNLTQKDIFPTMGLVSDAKSISALREMFETSR). N314 is a glycosylation site (N-linked (GlcNAc...) asparagine). Residues 345 to 365 (AMFVIALLGTFPGYWFTVFFI) traverse the membrane as a helical segment. The Cytoplasmic portion of the chain corresponds to 366–374 (EKIGRFKIQ). A helical membrane pass occupies residues 375–395 (LMGFFMMSIFMAIIGVRYDYL). Residues 396–405 (KTKDHKWTFA) lie on the Extracellular side of the membrane. Residues 406–426 (ALYGLTFFFANSGPNSTTFVL) form a helical membrane-spanning segment. The Cytoplasmic portion of the chain corresponds to 427–472 (PAELFPTRVRSTCHALSAASGKAGAMVSAFGVQQYTQDGEVHKIKK). The chain crosses the membrane as a helical span at residues 473 to 493 (AMLFLAFTNMVGFCCTFLVTE). Residues 494–529 (TKGRSLEEISGEDENQNETKMKGRPVSGGHQDDGWD) are Extracellular-facing. The segment at 500–529 (EEISGEDENQNETKMKGRPVSGGHQDDGWD) is disordered. Residue N510 is glycosylated (N-linked (GlcNAc...) asparagine).

The protein belongs to the major facilitator superfamily. Phosphate:H(+) symporter (TC 2.A.1.9) family. In terms of tissue distribution, expressed at low levels in non-mycorrhized roots.

The protein resides in the cell membrane. The enzyme catalyses phosphate(in) + H(+)(in) = phosphate(out) + H(+)(out). Its function is as follows. Low-affinity transporter for external inorganic phosphate (Pi) probably involved in the acquisition of phosphate released by arbuscular mycorrhizal (AM) fungi during AM symbiosis. This Petunia hybrida (Petunia) protein is Low affinity inorganic phosphate transporter 5.